The primary structure comprises 575 residues: Probable cytochrome P450 514A1 (575 aa).

Residues 4-24 form a helical membrane-spanning segment; the sequence is IFTIILTITILVLSLILKDLL. Position 448 (Cys448) interacts with heme.

The protein belongs to the cytochrome P450 family. Heme is required as a cofactor.

The protein localises to the membrane. The polypeptide is Probable cytochrome P450 514A1 (cyp514A1) (Dictyostelium discoideum (Social amoeba)).